The sequence spans 538 residues: Putative cysteine ligase BshC (538 aa).

Positions 248 to 268 (ISKYKEVQEGLRNQQEVIKEL) form a coiled coil.

It belongs to the BshC family.

Functionally, involved in bacillithiol (BSH) biosynthesis. May catalyze the last step of the pathway, the addition of cysteine to glucosamine malate (GlcN-Mal) to generate BSH. The polypeptide is Putative cysteine ligase BshC (Bacillus cereus (strain ATCC 14579 / DSM 31 / CCUG 7414 / JCM 2152 / NBRC 15305 / NCIMB 9373 / NCTC 2599 / NRRL B-3711)).